The following is a 343-amino-acid chain: Dihydroorotase (343 aa).

Zn(2+)-binding residues include H14 and H16. Residues 16–18 (HVR) and N42 each bind substrate. Zn(2+)-binding residues include K98, H135, and H173. Position 98 is an N6-carboxylysine (K98). H135 serves as a coordination point for substrate. L219 provides a ligand contact to substrate. D247 serves as a coordination point for Zn(2+). D247 is a catalytic residue. Substrate is bound by residues H251 and A263.

This sequence belongs to the metallo-dependent hydrolases superfamily. DHOase family. Class II DHOase subfamily. In terms of assembly, homodimer. Zn(2+) serves as cofactor.

It carries out the reaction (S)-dihydroorotate + H2O = N-carbamoyl-L-aspartate + H(+). Its pathway is pyrimidine metabolism; UMP biosynthesis via de novo pathway; (S)-dihydroorotate from bicarbonate: step 3/3. Catalyzes the reversible cyclization of carbamoyl aspartate to dihydroorotate. This chain is Dihydroorotase, found in Marinobacter nauticus (strain ATCC 700491 / DSM 11845 / VT8) (Marinobacter aquaeolei).